A 238-amino-acid polypeptide reads, in one-letter code: Orotidine 5'-phosphate decarboxylase (238 aa).

Substrate is bound by residues Asp10, Lys32, 59-68 (DLKLHDIPNT), Thr122, Arg184, Gln193, Gly213, and Arg214. Residue Lys61 is the Proton donor of the active site.

It belongs to the OMP decarboxylase family. Type 1 subfamily. In terms of assembly, homodimer.

The catalysed reaction is orotidine 5'-phosphate + H(+) = UMP + CO2. The protein operates within pyrimidine metabolism; UMP biosynthesis via de novo pathway; UMP from orotate: step 2/2. Functionally, catalyzes the decarboxylation of orotidine 5'-monophosphate (OMP) to uridine 5'-monophosphate (UMP). The protein is Orotidine 5'-phosphate decarboxylase of Bacillus mycoides (strain KBAB4) (Bacillus weihenstephanensis).